The following is a 566-amino-acid chain: Arginine--tRNA ligase (566 aa).

A 'HIGH' region motif is present at residues 124–134 (ANPNGPLHIGH).

The protein belongs to the class-I aminoacyl-tRNA synthetase family.

It localises to the cytoplasm. It catalyses the reaction tRNA(Arg) + L-arginine + ATP = L-arginyl-tRNA(Arg) + AMP + diphosphate. This Methanocaldococcus jannaschii (strain ATCC 43067 / DSM 2661 / JAL-1 / JCM 10045 / NBRC 100440) (Methanococcus jannaschii) protein is Arginine--tRNA ligase (argS).